Reading from the N-terminus, the 328-residue chain is Ribosomal RNA small subunit methyltransferase C (328 aa).

Belongs to the methyltransferase superfamily. RsmC family. As to quaternary structure, monomer.

It localises to the cytoplasm. The catalysed reaction is guanosine(1207) in 16S rRNA + S-adenosyl-L-methionine = N(2)-methylguanosine(1207) in 16S rRNA + S-adenosyl-L-homocysteine + H(+). Its function is as follows. Specifically methylates the guanine in position 1207 of 16S rRNA in the 30S particle. The chain is Ribosomal RNA small subunit methyltransferase C from Pasteurella multocida (strain Pm70).